A 238-amino-acid chain; its full sequence is Purine nucleoside phosphorylase DeoD-type (238 aa).

Histidine 5 is an a purine D-ribonucleoside binding site. Phosphate is bound by residues glycine 21, arginine 25, arginine 44, and 88–91; that span reads RIGT. Residues 180–182 and 204–205 contribute to the a purine D-ribonucleoside site; these read DME and SD. Aspartate 205 serves as the catalytic Proton donor.

It belongs to the PNP/UDP phosphorylase family. In terms of assembly, homohexamer; trimer of homodimers.

The enzyme catalyses a purine D-ribonucleoside + phosphate = a purine nucleobase + alpha-D-ribose 1-phosphate. The catalysed reaction is a purine 2'-deoxy-D-ribonucleoside + phosphate = a purine nucleobase + 2-deoxy-alpha-D-ribose 1-phosphate. Catalyzes the reversible phosphorolytic breakdown of the N-glycosidic bond in the beta-(deoxy)ribonucleoside molecules, with the formation of the corresponding free purine bases and pentose-1-phosphate. The protein is Purine nucleoside phosphorylase DeoD-type of Buchnera aphidicola subsp. Baizongia pistaciae (strain Bp).